The following is a 915-amino-acid chain: Protein translocase subunit SecA (915 aa).

ATP contacts are provided by residues Q87, 105-109 (GEGKT), and D516. The disordered stretch occupies residues 854–915 (QKMQMRHEQL…KYKNCHGQLE (62 aa)). Zn(2+)-binding residues include C899, C901, C910, and H911.

The protein belongs to the SecA family. Monomer and homodimer. Part of the essential Sec protein translocation apparatus which comprises SecA, SecYEG and auxiliary proteins SecDF-YajC and YidC. It depends on Zn(2+) as a cofactor.

The protein resides in the cell inner membrane. It localises to the cytoplasm. The catalysed reaction is ATP + H2O + cellular proteinSide 1 = ADP + phosphate + cellular proteinSide 2.. Functionally, part of the Sec protein translocase complex. Interacts with the SecYEG preprotein conducting channel. Has a central role in coupling the hydrolysis of ATP to the transfer of proteins into and across the cell membrane, serving both as a receptor for the preprotein-SecB complex and as an ATP-driven molecular motor driving the stepwise translocation of polypeptide chains across the membrane. This is Protein translocase subunit SecA from Cellvibrio japonicus (strain Ueda107) (Pseudomonas fluorescens subsp. cellulosa).